The sequence spans 310 residues: MIQSTMGHKQSVDSRGKGRKVPGSSSMVQKHRVESSGGAIISGPSLFDNLPEDCISNIISFTSPRDACVAASVSKTFESAVNSDSVWDKFLPSDYSSLVPPSRVFSSKKELYFAICDNPVLVEDGGKSFWLEKENGKKCFMLSPKKSMWITWVSTPQYWRWISIPEARFEEVPELLNVCWFEVRGGMNTKELSPGTRYSAYIVFKTKNGCPNLGDVPVEATVGLVGQESSQRHIYFVGPSDQRRDRETRDVTRPTKRKDGWMEAELGQFFNESGCDVVDTSILEIKTPYWKRGLIIQGIEFRPTKSLFYI.

Residues 1-34 (MIQSTMGHKQSVDSRGKGRKVPGSSSMVQKHRVE) form a disordered region. Residues 44–90 (PSLFDNLPEDCISNIISFTSPRDACVAASVSKTFESAVNSDSVWDKF) enclose the F-box domain.

This Arabidopsis thaliana (Mouse-ear cress) protein is Putative F-box protein PP2-B2 (PP2B2).